The primary structure comprises 222 residues: Ribosomal RNA small subunit methyltransferase G (222 aa).

Residues G80, L85, and R149 each contribute to the S-adenosyl-L-methionine site.

It belongs to the methyltransferase superfamily. RNA methyltransferase RsmG family.

It is found in the cytoplasm. Functionally, specifically methylates the N7 position of a guanine in 16S rRNA. The polypeptide is Ribosomal RNA small subunit methyltransferase G (Treponema pallidum (strain Nichols)).